The following is a 190-amino-acid chain: Glutamyl-tRNA(Gln) amidotransferase subunit F, mitochondrial (190 aa).

Belongs to the GatF family. As to quaternary structure, subunit of the heterotrimeric GatFAB amidotransferase (AdT) complex, composed of A, B and F subunits.

Its subcellular location is the mitochondrion inner membrane. It carries out the reaction L-glutamyl-tRNA(Gln) + L-glutamine + ATP + H2O = L-glutaminyl-tRNA(Gln) + L-glutamate + ADP + phosphate + H(+). In terms of biological role, allows the formation of correctly charged Gln-tRNA(Gln) through the transamidation of misacylated Glu-tRNA(Gln) in the mitochondria. The reaction takes place in the presence of glutamine and ATP through an activated gamma-phospho-Glu-tRNA(Gln). Required for proper protein synthesis within the mitochondrion. In Eremothecium gossypii (strain ATCC 10895 / CBS 109.51 / FGSC 9923 / NRRL Y-1056) (Yeast), this protein is Glutamyl-tRNA(Gln) amidotransferase subunit F, mitochondrial.